The sequence spans 125 residues: Holo-[acyl-carrier-protein] synthase (125 aa).

Residues aspartate 8 and glutamate 60 each coordinate Mg(2+).

This sequence belongs to the P-Pant transferase superfamily. AcpS family. Mg(2+) is required as a cofactor.

Its subcellular location is the cytoplasm. The enzyme catalyses apo-[ACP] + CoA = holo-[ACP] + adenosine 3',5'-bisphosphate + H(+). Its function is as follows. Transfers the 4'-phosphopantetheine moiety from coenzyme A to a Ser of acyl-carrier-protein. In Wolbachia sp. subsp. Brugia malayi (strain TRS), this protein is Holo-[acyl-carrier-protein] synthase.